We begin with the raw amino-acid sequence, 616 residues long: Protein LNK1 (616 aa).

4 disordered regions span residues 72 to 112, 361 to 398, 410 to 434, and 567 to 616; these read GKNP…HGFN, ESKS…GPTV, ANLL…KTDS, and SSLS…SDNN. Residues 371–395 are compositionally biased toward polar residues; sequence KPSPSSASNESYTSNHAQSIESLQG. The segment covering 567 to 577 has biased composition (low complexity); sequence SSLSSDNNVLS. Residues 594–608 show a composition bias toward basic and acidic residues; that stretch reads RIEKQEETTELRPEA.

In terms of assembly, interacts with CCA1, LHY, REV4 and REV8, but not with PRR7 or PRR9. Expressed in roots, stems, leaves, seedlings, cotyledons, inflorescences and siliques. Highest expression in root tips, young leaves and vasculatur tissues.

It is found in the nucleus. Its function is as follows. Transcriptional coactivator necessary for expression of the clock genes PRR5 and TOC1. Antagonizes REV8 function in the regulation of anthocyanin accumulation. Involved in red light input to the clock. Activates clock-controlled genes with afternoon peak. Mediates light inhibition of hypocotyl elongation. The protein is Protein LNK1 of Arabidopsis thaliana (Mouse-ear cress).